The chain runs to 294 residues: Energy-coupling factor transporter ATP-binding protein EcfA1 (294 aa).

Residues 27 to 260 enclose the ABC transporter domain; the sequence is IEFENVYFAY…EERLLKMQLD (234 aa). ATP is bound at residue 60-67; that stretch reads GHNGSGKS.

Belongs to the ABC transporter superfamily. Energy-coupling factor EcfA family. Forms a stable energy-coupling factor (ECF) transporter complex composed of 2 membrane-embedded substrate-binding proteins (S component), 2 ATP-binding proteins (A component) and 2 transmembrane proteins (T component).

The protein resides in the cell membrane. In terms of biological role, ATP-binding (A) component of a common energy-coupling factor (ECF) ABC-transporter complex. Unlike classic ABC transporters this ECF transporter provides the energy necessary to transport a number of different substrates. The sequence is that of Energy-coupling factor transporter ATP-binding protein EcfA1 from Ureaplasma parvum serovar 3 (strain ATCC 700970).